A 286-amino-acid polypeptide reads, in one-letter code: ATP synthase gamma chain (286 aa).

It belongs to the ATPase gamma chain family. As to quaternary structure, F-type ATPases have 2 components, CF(1) - the catalytic core - and CF(0) - the membrane proton channel. CF(1) has five subunits: alpha(3), beta(3), gamma(1), delta(1), epsilon(1). CF(0) has three main subunits: a, b and c.

The protein localises to the cell inner membrane. Its function is as follows. Produces ATP from ADP in the presence of a proton gradient across the membrane. The gamma chain is believed to be important in regulating ATPase activity and the flow of protons through the CF(0) complex. The polypeptide is ATP synthase gamma chain (Shewanella halifaxensis (strain HAW-EB4)).